The sequence spans 390 residues: 4-O-beta-D-mannosyl-D-glucose phosphorylase (390 aa).

This sequence belongs to the glycosyl hydrolase 130 family.

It catalyses the reaction 4-O-beta-D-mannopyranosyl-D-glucopyranose + phosphate = alpha-D-mannose 1-phosphate + D-glucose. In terms of biological role, converts 4-O-beta-D-mannopyranosyl-D-glucopyranose (Man-Glc) to mannose 1-phosphate (Man1P) and glucose. Involved in a mannan catabolic pathway which feeds into glycolysis. This is 4-O-beta-D-mannosyl-D-glucose phosphorylase from Bacteroides fragilis (strain ATCC 25285 / DSM 2151 / CCUG 4856 / JCM 11019 / LMG 10263 / NCTC 9343 / Onslow / VPI 2553 / EN-2).